The following is a 73-amino-acid chain: Large ribosomal subunit protein uL29 (73 aa).

The segment at 1–20 is disordered; that stretch reads MYKAKDLRDQSLEELEATHD.

The protein belongs to the universal ribosomal protein uL29 family.

The polypeptide is Large ribosomal subunit protein uL29 (Protochlamydia amoebophila (strain UWE25)).